A 100-amino-acid polypeptide reads, in one-letter code: Aspartyl/glutamyl-tRNA(Asn/Gln) amidotransferase subunit C (100 aa).

The protein belongs to the GatC family. In terms of assembly, heterotrimer of A, B and C subunits.

It catalyses the reaction L-glutamyl-tRNA(Gln) + L-glutamine + ATP + H2O = L-glutaminyl-tRNA(Gln) + L-glutamate + ADP + phosphate + H(+). It carries out the reaction L-aspartyl-tRNA(Asn) + L-glutamine + ATP + H2O = L-asparaginyl-tRNA(Asn) + L-glutamate + ADP + phosphate + 2 H(+). Its function is as follows. Allows the formation of correctly charged Asn-tRNA(Asn) or Gln-tRNA(Gln) through the transamidation of misacylated Asp-tRNA(Asn) or Glu-tRNA(Gln) in organisms which lack either or both of asparaginyl-tRNA or glutaminyl-tRNA synthetases. The reaction takes place in the presence of glutamine and ATP through an activated phospho-Asp-tRNA(Asn) or phospho-Glu-tRNA(Gln). This is Aspartyl/glutamyl-tRNA(Asn/Gln) amidotransferase subunit C from Rickettsia africae (strain ESF-5).